The sequence spans 2476 residues: Non-reducing polyketide synthase pkdA (2476 aa).

The N-terminal acylcarrier protein transacylase domain (SAT) stretch occupies residues 22 to 230 (PNLNDAYLQS…VISEARLATL (209 aa)). C142 serves as the catalytic Nucleophile; for transacylase activity. H261 acts as the Proton donor/acceptor; for transacylase activity in catalysis. Residues 388–805 (DESIAVVGMA…GSNASLVVTQ (418 aa)) form the Ketosynthase family 3 (KS3) domain. Active-site for beta-ketoacyl synthase activity residues include C554, H689, and H728. Residues 919-1204 (FGGQRSSFVG…GSGVTNLASR (286 aa)) are malonyl-CoA:ACP transacylase (MAT). The N-terminal hotdog fold stretch occupies residues 1290 to 1417 (QKGLWTFVGY…GRITFQTPKQ (128 aa)). The PKS/mFAS DH domain occupies 1290–1592 (QKGLWTFVGY…FVEVSIAGMS (303 aa)). The segment at 1321-1590 (YVSAHVIAQT…LHFVEVSIAG (270 aa)) is product template (PT) domain. The active-site Proton acceptor; for dehydratase activity is the H1325. The tract at residues 1445–1592 (QTIQGSRNIY…FVEVSIAGMS (148 aa)) is C-terminal hotdog fold. Residue D1501 is the Proton donor; for dehydratase activity of the active site. Positions 1626 to 1649 (DVSKNEKDAKAPSKKKESTSKSPG) are disordered. A Carrier domain is found at 1650-1724 (HDILARVRTL…SLVKCIGANM (75 aa)). At S1684 the chain carries O-(pantetheine 4'-phosphoryl)serine. The segment at 1727–1766 (SDTSRTGDDSSDDLETASAESETSSGINNEDSHNIDRQQI) is disordered. The span at 1742–1751 (TASAESETSS) shows a compositional bias: low complexity. Residues 1881-2030 (ELLRQYPEHA…DCEKTPSSHL (150 aa)) are methyltransferase (CMeT) domain. An NADPH-binding domain region spans residues 2094 to 2340 (VTGATGSLGS…SWCPVDDVAA (247 aa)).

The cofactor is pantetheine 4'-phosphate.

The catalysed reaction is propanoyl-CoA + 3 malonyl-CoA + AH2 + 2 S-adenosyl-L-methionine + H(+) = 2-ethyl-4,6-dihydroxy-3,5-dimethylbenzaldehyde + A + 2 S-adenosyl-L-homocysteine + 3 CO2 + 4 CoA + H2O. The protein operates within secondary metabolite biosynthesis. Functionally, non-reducing polyketide synthase that synthesizes 6-ethyl-2,4-dihydroxy-3,5-dimethylbenzaldehyde via condensation of one propanoyl-CoA starter unit with 3 malonyl-CoA units, as well as 2 methylation steps. This Emericella nidulans (strain FGSC A4 / ATCC 38163 / CBS 112.46 / NRRL 194 / M139) (Aspergillus nidulans) protein is Non-reducing polyketide synthase pkdA.